Consider the following 949-residue polypeptide: Coiled-coil domain-containing protein 80 (949 aa).

A signal peptide spans 1 to 22; the sequence is MMWKMGPHFTTLLAMWLVCGSA. Disordered regions lie at residues 24 to 79, 112 to 132, and 289 to 610; these read HSPA…RRKS, SSAR…MLRF, and HVVQ…PKKS. Residues 112 to 123 show a composition bias toward basic and acidic residues; the sequence is SSAREMVRDEGS. The segment covering 295-307 has biased composition (gly residues); sequence NEGGGGAGGTGLG. Over residues 308–328 the composition is skewed to basic and acidic residues; sequence GDKRKEDPRRTQVHPTREAPR. Low complexity predominate over residues 345 to 380; it reads RATTLPPAPVTTATRATSRVVTIAARPTTTTAYPAT. Positions 419–429 are enriched in basic and acidic residues; that stretch reads PRKEQQREKPQ. Over residues 436-445 the composition is skewed to polar residues; that stretch reads KATNYGSFTA. Positions 463–477 are enriched in basic and acidic residues; that stretch reads RFRDNRTDKREHGHQ. N-linked (GlcNAc...) asparagine glycosylation occurs at Asn467. A compositionally biased stretch (basic residues) spans 487–498; it reads KPVKGKLPKKKD. Composition is skewed to basic and acidic residues over residues 499 to 510, 534 to 548, and 556 to 581; these read RILSNEYEDKYD, KESK…PEKE, and AKQD…EKDK. Glycyl lysine isopeptide (Lys-Gly) (interchain with G-Cter in SUMO2) cross-links involve residues Lys544 and Lys547. The stretch at 554-587 forms a coiled coil; sequence KSAKQDKLLKSEKQAKKAEKKTKQEKDKNKKKKA.

Belongs to the CCDC80 family. As to quaternary structure, binds to various extracellular matrix proteins. Phosphorylated. Expressed in brain, stomach, colon, rectum, liver, lung, kidney, adipocytes and testis.

Its subcellular location is the secreted. The protein resides in the extracellular space. The protein localises to the extracellular matrix. Promotes cell adhesion and matrix assembly. This is Coiled-coil domain-containing protein 80 (Ccdc80) from Mus musculus (Mouse).